A 160-amino-acid polypeptide reads, in one-letter code: SsrA-binding protein (160 aa).

The protein belongs to the SmpB family.

It localises to the cytoplasm. In terms of biological role, required for rescue of stalled ribosomes mediated by trans-translation. Binds to transfer-messenger RNA (tmRNA), required for stable association of tmRNA with ribosomes. tmRNA and SmpB together mimic tRNA shape, replacing the anticodon stem-loop with SmpB. tmRNA is encoded by the ssrA gene; the 2 termini fold to resemble tRNA(Ala) and it encodes a 'tag peptide', a short internal open reading frame. During trans-translation Ala-aminoacylated tmRNA acts like a tRNA, entering the A-site of stalled ribosomes, displacing the stalled mRNA. The ribosome then switches to translate the ORF on the tmRNA; the nascent peptide is terminated with the 'tag peptide' encoded by the tmRNA and targeted for degradation. The ribosome is freed to recommence translation, which seems to be the essential function of trans-translation. The chain is SsrA-binding protein from Haemophilus ducreyi (strain 35000HP / ATCC 700724).